The sequence spans 27 residues: MWGLNRWLTFTMLILLITSHCCYWNKR.

This is an uncharacterized protein from Saccharomyces cerevisiae (strain ATCC 204508 / S288c) (Baker's yeast).